The primary structure comprises 118 residues: Small ribosomal subunit protein mS37 (118 aa).

Residues 42-84 enclose the CHCH domain; sequence EATCITEMSMMMACWKQNEFRDEACRKEIQDFFDCSSRAQEAR. 2 short sequence motifs (cx9C motif) span residues 45–55 and 66–76; these read CITEMSMMMAC and CRKEIQDFFDC. 2 disulfide bridges follow: cysteine 45/cysteine 76 and cysteine 55/cysteine 66. The tract at residues 86 to 105 is disordered; that stretch reads MRSIQESLGQSESLSPHKMT. A compositionally biased stretch (polar residues) spans 89-99; that stretch reads IQESLGQSESL.

The protein belongs to the mitochondrion-specific ribosomal protein mS37 family. Component of the mitochondrial ribosome small subunit (28S) which comprises a 12S rRNA and about 30 distinct proteins.

The protein localises to the mitochondrion. Its subcellular location is the nucleus. This is Small ribosomal subunit protein mS37 (Chchd1) from Mus musculus (Mouse).